A 170-amino-acid polypeptide reads, in one-letter code: Phosphopantetheine adenylyltransferase (170 aa).

T17 provides a ligand contact to substrate. Residues 17 to 18 and H25 each bind ATP; that span reads TF. 3 residues coordinate substrate: K49, L81, and R95. Residues 96–98, E106, and 131–137 contribute to the ATP site; these read GLR and LMYISST.

The protein belongs to the bacterial CoaD family. In terms of assembly, homohexamer. The cofactor is Mg(2+).

The protein resides in the cytoplasm. The catalysed reaction is (R)-4'-phosphopantetheine + ATP + H(+) = 3'-dephospho-CoA + diphosphate. The protein operates within cofactor biosynthesis; coenzyme A biosynthesis; CoA from (R)-pantothenate: step 4/5. Reversibly transfers an adenylyl group from ATP to 4'-phosphopantetheine, yielding dephospho-CoA (dPCoA) and pyrophosphate. This chain is Phosphopantetheine adenylyltransferase, found in Legionella pneumophila subsp. pneumophila (strain Philadelphia 1 / ATCC 33152 / DSM 7513).